The chain runs to 283 residues: Lactoylglutathione lyase GLX1 (283 aa).

Residue alanine 2 is modified to N-acetylalanine. VOC domains lie at 17–141 (RFLH…LIQR) and 147–275 (PFCQ…LVDN). Histidine 20 contributes to the Zn(2+) binding site. Arginine 24 serves as a coordination point for substrate. Glutamate 71 serves as a coordination point for Zn(2+). Substrate contacts are provided by asparagine 75 and histidine 89. Residues histidine 89, glutamate 137, and glutamine 150 each coordinate Zn(2+). The active-site Proton donor/acceptor is the glutamate 137. Residues glutamine 150 and arginine 154 each coordinate substrate. Residue glutamine 150 participates in a divalent metal cation binding. Zn(2+) is bound at residue glutamate 201. Glutamate 201 is an a divalent metal cation binding site. Residue asparagine 205 participates in substrate binding. Glutamine 219 contributes to the a divalent metal cation binding site. 251–252 (PL) lines the substrate pocket. Valine 271 contacts a divalent metal cation.

Belongs to the glyoxalase I family. Homodimer. It depends on Zn(2+) as a cofactor. Phosphorylated by SnRK2.8.

It catalyses the reaction (R)-S-lactoylglutathione = methylglyoxal + glutathione. Its pathway is secondary metabolite metabolism; methylglyoxal degradation; (R)-lactate from methylglyoxal: step 1/2. In terms of biological role, catalyzes the conversion of hemimercaptal, formed from methylglyoxal and glutathione, to S-lactoylglutathione. This chain is Lactoylglutathione lyase GLX1, found in Arabidopsis thaliana (Mouse-ear cress).